The following is a 61-amino-acid chain: Myrmicitoxin(1)-Pm5a (61 aa).

An N-terminal signal peptide occupies residues 1-23 (MKAIIFLFAVLTVVAIIIPIISG). Residues 24–33 (EPNAGPLAAS) constitute a propeptide that is removed on maturation. Q60 is modified (glutamine amide).

The protein belongs to the formicidae venom clade 2 family. As to expression, expressed by the venom gland.

It localises to the secreted. Toxin that causes a rapid and irreversible paralysis when intrathoracically injected into insects (blowflies). Does not cause spontaneous nocifensive behaviors by intraplantar injection in mice. This Pogonomyrmex maricopa (Maricopa harvester ant) protein is Myrmicitoxin(1)-Pm5a.